Reading from the N-terminus, the 344-residue chain is MRVAVLPGDGIGPEVTEAALRVLKALDEREGLGLTYETFPFGGAAIDGYGEPFPEVTRKGVEAAEAVLLGSVGGPKWDALPRKIRPESGLLALRKSQDLFANLRPAKVFPGLERLSPLKEEIARGVDVLIVRELTGGIYFGEPRGMSEAEAWNTERYSKPEVERVAKVAFEAARKRRRHLTSVDKANVLEVGEFWRKTVEEVHKGYPDVALDHQYVDAMAMHLVKNPARFDVVVTGNIFGDILSDLASVLPGSLGLLPSASLGRGTPVFEPVHGSAPDIAGKGIANPTAAILSAAMMLEHAFGLVELARRVEAAVAKALRETPPPDLGGSAGTQAFTEEVLRHL.

Residue 74-87 (GPKWDALPRKIRPE) coordinates NAD(+). Residues arginine 94, arginine 104, arginine 132, and aspartate 217 each contribute to the substrate site. The Mg(2+) site is built by aspartate 217, aspartate 241, and aspartate 245. NAD(+) is bound at residue 274 to 286 (GSAPDIAGKGIAN).

It belongs to the isocitrate and isopropylmalate dehydrogenases family. LeuB type 1 subfamily. As to quaternary structure, homodimer. It depends on Mg(2+) as a cofactor. Mn(2+) serves as cofactor.

It is found in the cytoplasm. The catalysed reaction is (2R,3S)-3-isopropylmalate + NAD(+) = 4-methyl-2-oxopentanoate + CO2 + NADH. Its pathway is amino-acid biosynthesis; L-leucine biosynthesis; L-leucine from 3-methyl-2-oxobutanoate: step 3/4. Functionally, catalyzes the oxidation of 3-carboxy-2-hydroxy-4-methylpentanoate (3-isopropylmalate) to 3-carboxy-4-methyl-2-oxopentanoate. The product decarboxylates to 4-methyl-2 oxopentanoate. In Thermus aquaticus, this protein is 3-isopropylmalate dehydrogenase (leuB).